Here is a 712-residue protein sequence, read N- to C-terminus: Polyribonucleotide nucleotidyltransferase (712 aa).

Residues aspartate 493 and aspartate 499 each contribute to the Mg(2+) site. One can recognise a KH domain in the interval 560-619 (PRLLTFKVDPEDIGKIIGPGGKTVRGITEATGAKVDISDDGTITVSSSVGGQAEAARAMI). Residues 629–697 (GQVYLGKVTR…HKGRINLTRL (69 aa)) form the S1 motif domain.

Belongs to the polyribonucleotide nucleotidyltransferase family. Mg(2+) serves as cofactor.

The protein resides in the cytoplasm. It carries out the reaction RNA(n+1) + phosphate = RNA(n) + a ribonucleoside 5'-diphosphate. Its function is as follows. Involved in mRNA degradation. Catalyzes the phosphorolysis of single-stranded polyribonucleotides processively in the 3'- to 5'-direction. The sequence is that of Polyribonucleotide nucleotidyltransferase from Synechococcus sp. (strain JA-2-3B'a(2-13)) (Cyanobacteria bacterium Yellowstone B-Prime).